The primary structure comprises 448 residues: FAD-dependent monooxygenase srdH (448 aa).

FAD contacts are provided by E32 and R107. Q227 is a catalytic residue. D313 provides a ligand contact to FAD.

The protein belongs to the paxM FAD-dependent monooxygenase family. FAD serves as cofactor.

In terms of biological role, highly reducing polyketide synthase; part of the gene cluster that mediates the biosynthesis of sordarial, a salicylic aldehyde structurally related to the phytotoxin pyriculol. The most interesting aspect of this pathway is formation of an aromatic product from the highly reducing polyketide synthase srdA. SrdA synthesizes a reduced polyketide chain from one molecule of acetyl-CoA and five molecules of malonyl-CoA. The polyketide chain is then reductively released as an aldehyde. The oxidoreductases srdC, srdD and srdE then oxidize one of the hydroxy groups to facilitate the intramolecular aldol condensation, followed by dehydration to yield a salicylic aldehyde. This aldehyde can undergo facile reduction by endogenous reductases to yield the alcohol 1-hydroxy-2-hydroxymethyl-3-pent-1,3-dienylbenzene. The flavin-dependent srdI counteract against the propensity of the aldehydes to be reduced under physiological conditions and is responsible for reoxidizing 1-hydroxy-2-hydroxymethyl-3-pent-1,3-dienylbenzene back to the salicylic aldehyde. This salicylic aldehyde is then selectively epoxidized by the cupin-domain-containing oxidoreductase srdB to yield the epoxide, which can be hydrolyzed stereoselectively by the hydrolase srdG to give the final product sordarial. This is FAD-dependent monooxygenase srdH from Neurospora crassa (strain ATCC 24698 / 74-OR23-1A / CBS 708.71 / DSM 1257 / FGSC 987).